The chain runs to 270 residues: Coiled-coil domain-containing protein 3 (270 aa).

Residues Met1 to Ala21 form the signal peptide. Asn100 carries an N-linked (GlcNAc...) asparagine glycan. A coiled-coil region spans residues Ser188–Ala251.

Homodimer. In terms of tissue distribution, expressed in umbilical vein endothelial cells (HUVEC), and at lower levels in aortic smooth muscle cells (HASMC).

It is found in the secreted. Functionally, negatively regulates TNF-alpha-induced pro-inflammatory response in endothelial cells (ECs) via inhibition of TNF-alpha-induced NF-kappaB activation in ECs. Positively regulates lipid accumulation in adipose cells. This Homo sapiens (Human) protein is Coiled-coil domain-containing protein 3 (CCDC3).